The chain runs to 85 residues: Large ribosomal subunit protein bL27 (85 aa).

The disordered stretch occupies residues 1–21 (MAHKKAGGSTRNGRDSESKRL).

Belongs to the bacterial ribosomal protein bL27 family.

This chain is Large ribosomal subunit protein bL27, found in Photorhabdus laumondii subsp. laumondii (strain DSM 15139 / CIP 105565 / TT01) (Photorhabdus luminescens subsp. laumondii).